The following is a 1029-amino-acid chain: uncharacterized protein (1029 aa).

The span at 1–23 (MREWCMLRESRTNTPRRAAERGK) shows a compositional bias: basic and acidic residues. The tract at residues 1–31 (MREWCMLRESRTNTPRRAAERGKRPGGSSVR) is disordered. The Guanylate cyclase domain occupies 39-168 (TALCYDLVGS…AALAMAARLQ (130 aa)). 261-268 (GDAGIGKS) contacts ATP.

This is an uncharacterized protein from Rhizobium meliloti (strain 1021) (Ensifer meliloti).